Consider the following 4544-residue polypeptide: Prolow-density lipoprotein receptor-related protein 1 (4544 aa).

The signal sequence occupies residues 1-19; it reads MLTPPLLLLLPLLSALVAA. Topologically, residues 20 to 4419 are extracellular; sequence AIDAPKTCSP…EHVFSQQQPG (4400 aa). 2 LDL-receptor class A domains span residues 25 to 66 and 70 to 110; these read KTCS…ICPQ and QRCQ…HCRE. Cystine bridges form between cysteine 27/cysteine 40, cysteine 34/cysteine 53, cysteine 47/cysteine 64, cysteine 72/cysteine 85, cysteine 79/cysteine 98, and cysteine 92/cysteine 108. One can recognise an EGF-like 1 domain in the interval 111–149; sequence LQGNCSRLGCQHHCVPTLDGPTCYCNSSFQLQADGKTCK. The N-linked (GlcNAc...) asparagine glycan is linked to asparagine 114. Intrachain disulfides connect cysteine 115–cysteine 124, cysteine 120–cysteine 133, cysteine 135–cysteine 148, cysteine 154–cysteine 164, cysteine 160–cysteine 173, and cysteine 175–cysteine 188. Asparagine 136 is a glycosylation site (N-linked (GlcNAc...) asparagine). One can recognise an EGF-like 2; calcium-binding domain in the interval 150–189; that stretch reads DFDECSVYGTCSQLCTNTDGSFICGCVEGYLLQPDNRSCK. Asparagine 185, asparagine 239, and asparagine 274 each carry an N-linked (GlcNAc...) asparagine glycan. LDL-receptor class B repeat units follow at residues 292 to 334, 335 to 378, and 379 to 422; these read GNFY…DPAM, GKVF…DLVS, and RLVY…FENY. Residue asparagine 357 is glycosylated (N-linked (GlcNAc...) asparagine). The N-linked (GlcNAc...) asparagine glycan is linked to asparagine 446. Residues 474-520 form the EGF-like 3 domain; the sequence is RSHACENDQYGKPGGCSDICLLANSHKARTCRCRSGFSLGSDGKSCK. 3 cysteine pairs are disulfide-bonded: cysteine 478-cysteine 493, cysteine 489-cysteine 504, and cysteine 506-cysteine 519. LDL-receptor class B repeat units follow at residues 571-613, 614-659, 660-710, and 711-754; these read GFIY…DWMG, DNLY…DPLN, GWMY…DIPA, and GRLY…HGNY. Asparagine 729 carries an N-linked (GlcNAc...) (complex) asparagine glycan. Positions 803–843 constitute an EGF-like 4 domain; it reads GTNKCRVNNGGCSSLCLATPGSRQCACAEDQVLDADGVTCL. 33 disulfide bridges follow: cysteine 807-cysteine 818, cysteine 814-cysteine 827, cysteine 829-cysteine 842, cysteine 854-cysteine 866, cysteine 861-cysteine 879, cysteine 873-cysteine 890, cysteine 895-cysteine 907, cysteine 902-cysteine 920, cysteine 914-cysteine 931, cysteine 936-cysteine 948, cysteine 943-cysteine 961, cysteine 955-cysteine 971, cysteine 976-cysteine 989, cysteine 984-cysteine 1002, cysteine 996-cysteine 1011, cysteine 1015-cysteine 1027, cysteine 1022-cysteine 1040, cysteine 1034-cysteine 1051, cysteine 1062-cysteine 1075, cysteine 1069-cysteine 1088, cysteine 1082-cysteine 1097, cysteine 1104-cysteine 1118, cysteine 1112-cysteine 1131, cysteine 1125-cysteine 1140, cysteine 1145-cysteine 1159, cysteine 1152-cysteine 1172, cysteine 1166-cysteine 1182, cysteine 1185-cysteine 1196, cysteine 1192-cysteine 1206, cysteine 1208-cysteine 1221, cysteine 1227-cysteine 1237, cysteine 1233-cysteine 1246, and cysteine 1248-cysteine 1261. 8 LDL-receptor class A domains span residues 852 to 892, 893 to 933, 934 to 973, 974 to 1013, 1013 to 1053, 1060 to 1099, 1102 to 1142, and 1143 to 1182; these read PQCQ…LCHQ, HTCP…TCSA, RTCP…SCAY, PTCF…GCSH, HSCS…NCTN, GGCH…SCEG, HVCD…NCES, and LACR…GELC. Residues tryptophan 871, aspartate 874, aspartate 876, aspartate 878, aspartate 884, and glutamate 885 each contribute to the Ca(2+) site. Asparagine 928 carries an N-linked (GlcNAc...) asparagine glycan. Ca(2+)-binding residues include tryptophan 1032, aspartate 1035, aspartate 1037, aspartate 1039, aspartate 1045, and glutamate 1046. The N-linked (GlcNAc...) asparagine glycan is linked to asparagine 1050. Ca(2+)-binding residues include tryptophan 1080, aspartate 1083, aspartate 1085, aspartate 1087, aspartate 1093, and glutamate 1094. 2 N-linked (GlcNAc...) asparagine glycosylation sites follow: asparagine 1154 and asparagine 1155. 2 consecutive EGF-like domains span residues 1183-1222 and 1223-1262; these read DQCS…HTCQ and IQSY…ESCR. Residues asparagine 1195 and asparagine 1218 are each glycosylated (N-linked (GlcNAc...) asparagine). LDL-receptor class B repeat units follow at residues 1309–1355, 1356–1398, 1399–1445, 1446–1490, and 1491–1531; these read SALY…DWIA, GNIY…DPRD, GILF…DYLE, KRIL…YGGE, and VYWT…YHPS. N-linked (GlcNAc...) (complex) asparagine glycosylation occurs at asparagine 1511. In terms of domain architecture, EGF-like 7 spans 1536 to 1579; it reads APNPCEANGGQGPCSHLCLINYNRTVSCACPHLMKLHKDNTTCY. Intrachain disulfides connect cysteine 1540-cysteine 1553, cysteine 1549-cysteine 1563, and cysteine 1565-cysteine 1578. Asparagine 1558, asparagine 1575, asparagine 1616, and asparagine 1645 each carry an N-linked (GlcNAc...) asparagine glycan. 4 LDL-receptor class B repeats span residues 1627–1669, 1670–1713, 1714–1753, and 1754–1798; these read QRVY…DWVS, RNLF…HPLR, GKLY…DFPE, and SKLY…MGDK. Asparagine 1723, asparagine 1733, asparagine 1763, and asparagine 1825 each carry an N-linked (GlcNAc...) asparagine glycan. Positions 1846–1887 constitute an EGF-like 8 domain; sequence GTNPCSVNNGDCSQLCLPTSETTRSCMCTAGYSLRSGQQACE. Intrachain disulfides connect cysteine 1850–cysteine 1861, cysteine 1857–cysteine 1871, and cysteine 1873–cysteine 1886. N-linked (GlcNAc...) asparagine glycosylation is present at asparagine 1933. LDL-receptor class B repeat units lie at residues 1934–1976, 1977–2019, 2020–2063, and 2064–2107; these read DTIY…DWIA, GNIY…HPEK, GYLF…DYQD, and GKLY…FEDF. A glycan (N-linked (GlcNAc...) asparagine) is linked at asparagine 1995. N6-acetyllysine is present on lysine 2009. N-linked (GlcNAc...) asparagine glycosylation is present at asparagine 2048. N-linked (GlcNAc...) asparagine glycans are attached at residues asparagine 2117 and asparagine 2127. Residues 2155-2195 enclose the EGF-like 9 domain; the sequence is GTNVCAVANGGCQQLCLYRGRGQRACACAHGMLAEDGASCR. 3 disulfide bridges follow: cysteine 2159-cysteine 2170, cysteine 2166-cysteine 2180, and cysteine 2182-cysteine 2194. LDL-receptor class B repeat units follow at residues 2253–2294, 2295–2343, 2344–2388, 2389–2431, and 2432–2473; these read NRIF…HRGW, DTLY…DECQ, NLMF…DHRA, EKLY…YGEH, and IFWT…VAND. Asparagine 2472 is a glycosylation site (N-linked (GlcNAc...) asparagine). The region spanning 2478 to 2518 is the EGF-like 10 domain; the sequence is ELSPCRINNGGCQDLCLLTHQGHVNCSCRGGRILQDDLTCR. Cystine bridges form between cysteine 2482–cysteine 2493, cysteine 2489–cysteine 2503, and cysteine 2505–cysteine 2517. The N-linked (GlcNAc...) asparagine glycan is linked to asparagine 2502. Asparagine 2521 is a glycosylation site (N-linked (GlcNAc...) asparagine). LDL-receptor class A domains are found at residues 2522–2563, 2564–2602, 2603–2641, 2642–2690, 2694–2732, 2732–2771, and 2772–2814; these read SSCR…YCNS, RRCK…PCNK, TACG…NCSA, TDCS…DCPG, PRCP…HCNK, KFCS…HCEG, and KTCG…GCLY. 6 disulfides stabilise this stretch: cysteine 2524–cysteine 2537, cysteine 2532–cysteine 2550, cysteine 2544–cysteine 2561, cysteine 2566–cysteine 2578, cysteine 2573–cysteine 2591, and cysteine 2585–cysteine 2600. The N-linked (GlcNAc...) asparagine glycan is linked to asparagine 2539. An N-linked (GlcNAc...) asparagine glycan is attached at asparagine 2601. Disulfide bonds link cysteine 2605–cysteine 2617, cysteine 2612–cysteine 2630, cysteine 2624–cysteine 2639, cysteine 2644–cysteine 2666, cysteine 2660–cysteine 2679, cysteine 2673–cysteine 2688, cysteine 2696–cysteine 2708, cysteine 2703–cysteine 2721, cysteine 2715–cysteine 2730, cysteine 2734–cysteine 2746, cysteine 2741–cysteine 2759, cysteine 2753–cysteine 2769, cysteine 2774–cysteine 2787, cysteine 2781–cysteine 2800, and cysteine 2794–cysteine 2812. Asparagine 2620 and asparagine 2638 each carry an N-linked (GlcNAc...) asparagine glycan. The N-linked (GlcNAc...) asparagine glycan is linked to asparagine 2815. LDL-receptor class A domains follow at residues 2816 to 2855, 2856 to 2899, and 2902 to 2940; these read STCD…ECEY, PTCG…HCTS, and HKCN…RGCH. Cystine bridges form between cysteine 2818-cysteine 2830, cysteine 2825-cysteine 2843, cysteine 2837-cysteine 2853, cysteine 2858-cysteine 2870, cysteine 2865-cysteine 2884, cysteine 2878-cysteine 2897, cysteine 2904-cysteine 2917, cysteine 2912-cysteine 2930, cysteine 2924-cysteine 2939, cysteine 2944-cysteine 2956, cysteine 2952-cysteine 2965, cysteine 2967-cysteine 2980, cysteine 2986-cysteine 2996, cysteine 2992-cysteine 3005, and cysteine 3007-cysteine 3021. Residue asparagine 2905 is glycosylated (N-linked (GlcNAc...) asparagine). One can recognise an EGF-like 11 domain in the interval 2941–2981; sequence INECLSRKLSGCSQDCEDLKIGFKCRCRPGFRLKDDGRTCA. The EGF-like 12; calcium-binding domain occupies 2982 to 3022; it reads DVDECSTTFPCSQRCINTHGSYKCLCVEGYAPRGGDPHSCK. Asparagine 3048 and asparagine 3089 each carry an N-linked (GlcNAc...) asparagine glycan. LDL-receptor class B repeat units lie at residues 3069-3113, 3114-3156, 3157-3200, 3201-3243, and 3244-3284; these read QMIY…DWVG, GNLY…DVQN, GYLY…DYVT, ERIY…FEDY, and VYWT…FHAL. Residue asparagine 3264 is glycosylated (N-linked (GlcNAc...) asparagine). The 42-residue stretch at 3290-3331 folds into the EGF-like 13 domain; it reads PNHPCKVNNGGCSNLCLLSPGGGHKCACPTNFYLGSDGRTCV. Intrachain disulfides connect cysteine 3294–cysteine 3305, cysteine 3301–cysteine 3315, and cysteine 3317–cysteine 3330. LDL-receptor class A domains are found at residues 3332-3371, 3372-3410, 3411-3450, 3451-3491, 3492-3533, 3534-3572, 3573-3611, 3611-3649, 3652-3692, 3693-3733, and 3739-3778; these read SNCT…DCPE, FKCR…NCDI, HVCL…DCPE, VTCA…NCTQ, MTCG…ECDE, RTCE…SCTP, RPCS…DCTP, PRCD…ACGT, RTCP…ECAR, FVCP…DCEP, and THCK…DCSI. Asparagine 3333 carries an N-linked (GlcNAc...) asparagine glycan. Intrachain disulfides connect cysteine 3334/cysteine 3346, cysteine 3341/cysteine 3359, cysteine 3353/cysteine 3369, cysteine 3374/cysteine 3386, cysteine 3381/cysteine 3399, cysteine 3393/cysteine 3408, cysteine 3413/cysteine 3426, cysteine 3420/cysteine 3439, cysteine 3433/cysteine 3448, cysteine 3453/cysteine 3466, cysteine 3460/cysteine 3479, cysteine 3473/cysteine 3489, cysteine 3494/cysteine 3507, cysteine 3501/cysteine 3520, cysteine 3514/cysteine 3531, cysteine 3536/cysteine 3548, cysteine 3543/cysteine 3561, cysteine 3555/cysteine 3570, cysteine 3575/cysteine 3587, cysteine 3582/cysteine 3600, cysteine 3594/cysteine 3609, cysteine 3613/cysteine 3625, cysteine 3620/cysteine 3638, cysteine 3632/cysteine 3647, cysteine 3654/cysteine 3666, cysteine 3661/cysteine 3679, cysteine 3673/cysteine 3690, cysteine 3695/cysteine 3709, cysteine 3703/cysteine 3722, cysteine 3716/cysteine 3731, cysteine 3741/cysteine 3754, cysteine 3749/cysteine 3767, cysteine 3761/cysteine 3776, cysteine 3785/cysteine 3798, cysteine 3792/cysteine 3807, cysteine 3809/cysteine 3822, cysteine 3828/cysteine 3838, cysteine 3834/cysteine 3847, and cysteine 3849/cysteine 3860. The N-linked (GlcNAc...) asparagine glycan is linked to asparagine 3488. Asparagine 3662 is a glycosylation site (N-linked (GlcNAc...) asparagine). EGF-like domains are found at residues 3781 to 3823 and 3824 to 3861; these read KLTS…PGCQ and DINE…NTCK. Asparagine 3788 carries N-linked (GlcNAc...) asparagine glycosylation. N-linked (GlcNAc...) asparagine glycosylation occurs at asparagine 3839. 4 LDL-receptor class B repeats span residues 3912–3954, 3970–4012, 4013–4056, and 4057–4101; these read GRVY…HLNI, GNVY…DPLR, GTMY…DYHN, and ERLY…FEDY. The short motif at 3940–3943 is the Recognition site for proteolytical processing element; the sequence is RHRR. A glycan (N-linked (GlcNAc...) asparagine) is linked at asparagine 3953. Residues asparagine 4075 and asparagine 4125 are each glycosylated (N-linked (GlcNAc...) asparagine). EGF-like domains follow at residues 4147 to 4183, 4196 to 4232, 4232 to 4268, 4268 to 4304, 4304 to 4340, 4340 to 4375, and 4373 to 4409; these read VTNP…GTCV, RPGT…DKCE, ELDQ…PKCT, TQQV…DRCQ, QYRQ…SRCE, EVNK…PSCL, and SCLT…PRCE. Intrachain disulfides connect cysteine 4151/cysteine 4160, cysteine 4156/cysteine 4169, cysteine 4171/cysteine 4182, cysteine 4200/cysteine 4210, cysteine 4204/cysteine 4220, cysteine 4222/cysteine 4231, cysteine 4236/cysteine 4246, cysteine 4240/cysteine 4256, cysteine 4258/cysteine 4267, cysteine 4272/cysteine 4282, cysteine 4276/cysteine 4292, cysteine 4294/cysteine 4303, cysteine 4308/cysteine 4318, cysteine 4312/cysteine 4328, cysteine 4330/cysteine 4339, cysteine 4344/cysteine 4352, and cysteine 4347/cysteine 4363. N-linked (GlcNAc...) asparagine glycosylation is present at asparagine 4179. 2 N-linked (GlcNAc...) asparagine glycosylation sites follow: asparagine 4278 and asparagine 4279. N-linked (GlcNAc...) asparagine glycosylation is present at asparagine 4364. Disulfide bonds link cysteine 4365/cysteine 4374, cysteine 4377/cysteine 4387, cysteine 4381/cysteine 4397, and cysteine 4399/cysteine 4408. The helical transmembrane segment at 4420–4444 threads the bilayer; it reads HIASILIPLLLLLLLVLVAGVVFWY. Over 4445–4544 the chain is Cytoplasmic; that stretch reads KRRVQGAKGF…PEDEIGDPLA (100 aa). Residues 4445-4544 form an interaction with MAFB region; it reads KRRVQGAKGF…PEDEIGDPLA (100 aa). Threonine 4460 carries the post-translational modification Phosphothreonine. Positions 4502–4507 match the NPXY motif motif; sequence FTNPVY. Position 4507 is a phosphotyrosine (tyrosine 4507). Phosphoserine occurs at positions 4517, 4520, and 4523.

Belongs to the LDLR family. As to quaternary structure, heterodimer of an 85-kDa membrane-bound carboxyl subunit and a non-covalently attached 515-kDa N-terminal subunit. Intracellular domain interacts with MAFB. Found in a complex with PID1/PCLI1, LRP1 and CUBNI. Interacts with SNX17, PID1/PCLI1, PDGF and CUBN. The intracellular domain interacts with SHC1, GULP1 and DAB1. Can weakly interact (via NPXY motif) with DAB2 (via PID domain); the interaction is enhanced by tyrosine phosphorylation of the NPXY motif. Interacts with MDK; promotes neuronal survival. Interacts with LRPAP1; this interaction is followed by rapid internalization. Interacts with uPA/PLAU and PAI1/SERPINE1, either individually or in complex with each other, leading to rapid endocytosis; this interaction is abolished in the presence of LRPAP1/RAP. Also interacts with tPA/PLAT alone or in complex with SERPINE1. Interacts with the urokinase receptor PLAUR; this interaction leads to PLAUR internalization and is impaired in the presence of SORL1. Interacts with PDGFB. Interacts with TAU/MAPT, leading to endocytosis; this interaction is reduced in the presence of LRPAP1/RAP. Interacts with IGFBP3; this interaction mediates cell growth inhibition independently of IGF1. Interacts with ADGRG6. In terms of assembly, (Microbial infection) Interacts with bacterial exotoxins. (Microbial infection) Interacts with Rift valley fever virus (RVFV) glycoprotein N; this interaction facilitates virus entry. Post-translationally, cleaved into a 85 kDa membrane-spanning subunit (LRP-85) and a 515 kDa large extracellular domain (LRP-515) that remains non-covalently associated. Gamma-secretase-dependent cleavage of LRP-85 releases the intracellular domain from the membrane. The N-terminus is blocked. In terms of processing, phosphorylated on serine and threonine residues. Post-translationally, phosphorylated on tyrosine residues upon stimulation with PDGF. Tyrosine phosphorylation promotes interaction with SHC1. In terms of tissue distribution, most abundant in liver, brain and lung.

It is found in the cell membrane. Its subcellular location is the membrane. It localises to the coated pit. The protein localises to the cytoplasm. The protein resides in the nucleus. It is found in the golgi outpost. Its subcellular location is the cytoskeleton. It localises to the microtubule organizing center. Functionally, endocytic receptor involved in endocytosis and in phagocytosis of apoptotic cells. Required for early embryonic development. Involved in cellular lipid homeostasis. Involved in the plasma clearance of chylomicron remnants and activated LRPAP1 (alpha 2-macroglobulin), as well as the local metabolism of complexes between plasminogen activators and their endogenous inhibitors. Acts as an LRPAP1 alpha-2-macroglobulin receptor. Acts as TAU/MAPT receptor and controls the endocytosis of TAU/MAPT as well as its subsequent spread. May modulate cellular events, such as APP metabolism, kinase-dependent intracellular signaling, neuronal calcium signaling as well as neurotransmission. Also acts as a receptor for IGFBP3 to mediate cell growth inhibition. In terms of biological role, (Microbial infection) Functions as a receptor for Pseudomonas aeruginosa exotoxin A. This chain is Prolow-density lipoprotein receptor-related protein 1, found in Homo sapiens (Human).